We begin with the raw amino-acid sequence, 189 residues long: Transcription factor FapR (189 aa).

It belongs to the FapR family.

In terms of biological role, transcriptional factor involved in regulation of membrane lipid biosynthesis by repressing genes involved in fatty acid and phospholipid metabolism. The protein is Transcription factor FapR of Exiguobacterium sp. (strain ATCC BAA-1283 / AT1b).